Reading from the N-terminus, the 2497-residue chain is Polyprotein P1234 (2497 aa).

Positions E28 to H259 constitute an Alphavirus-like MT domain. Residues G244–V263 are nsP1 membrane-binding. C419 carries the S-palmitoyl cysteine; by host lipid modification. One can recognise a (+)RNA virus helicase ATP-binding domain in the interval E690–K841. G721–S728 serves as a coordination point for a ribonucleoside 5'-triphosphate. A (+)RNA virus helicase C-terminal domain is found at S842–A990. One can recognise a Peptidase C9 domain in the interval D1003–S1322. The tract at residues V1004–T1023 is nucleolus localization signal. C1012 functions as the For cysteine protease nsP2 activity in the catalytic mechanism. The Nuclear export signal signature appears at V1056–S1065. Residue H1081 is the For cysteine protease nsP2 activity of the active site. Residues S1179–V1183 carry the Nuclear localization signal motif. The Macro domain maps to G1328 to E1489. ADP-D-ribose contacts are provided by D1339, N1353, G1361, G1441, I1442, and F1443. 4 residues coordinate Zn(2+): C1596, C1598, C1621, and C1639. Disordered stretches follow at residues I1774–S1806 and A1827–G1865. The segment at R1856–A1877 is binding to host FXR family members. The region spanning D2254–A2369 is the RdRp catalytic domain.

In terms of assembly, interacts with non-structural protein 3. Interacts with RNA-directed RNA polymerase nsP4. Interacts with protease nsP2. interacts with itself. As to quaternary structure, interacts with mRNA-capping enzyme nsP1. Interacts with host DDX1. Interacts with host DDX3. Interacts (via C-terminus) with host FXR1; this interaction inhibits the formation of host stress granules on viral mRNAs and the nsp3-FXR1 complexes bind viral RNAs and probably orchestrate the assembly of viral replication complexes. Interacts (via C-terminus) with host FXR2; this interaction inhibits the formation of host stress granules on viral mRNAs and the nsp3-FXR2 complexes bind viral RNAs and probably orchestrate the assembly of viral replication complexes. Interacts (via C-terminus) with host FMR1; this interaction inhibits the formation of host stress granules on viral mRNAs and the nsp3-FMR1 complexes bind viral RNAs and probably orchestrate the assembly of viral replication complexes. Interacts with mRNA-capping enzyme nsP1. Interacts with protease nsP2. interacts with itself. In terms of assembly, interacts with RNA-directed RNA polymerase nsP4. Interacts with mRNA-capping enzyme nsP1. Interacts with KPNA1/karyopherin-alpha1; this interaction probably allows the active transport of protease nsP2 into the host nucleus. Requires Mg(2+) as cofactor. The cofactor is Mn(2+). Specific enzymatic cleavages in vivo yield mature proteins. The processing of the polyprotein is temporally regulated. In early stages (1.7 hpi), P1234 is first cleaved in trans through its nsP2 protease activity, releasing P123' and nsP4, which associate to form the early replication complex. At the same time, P1234 is also cut at the nsP1/nsP2 site early in infection but with lower efficiency. After replication of the viral minus-strand RNAs (4 hpi), the polyproteins are cut at the nsP1/nsP2 and nsP2/nsP3 sites very efficiently, preventing accumulation of P123' and P1234 and allowing the formation of the late replication complex. NsP3'/nsP4 site is not cleaved anymore and P34 is produced rather than nsP4. Post-translationally, specific enzymatic cleavages in vivo yield mature proteins. The processing of the polyprotein is temporally regulated. In early stages (1.7 hpi), P123 is cleaved at the nsP1/nsP2 site with low efficiency. After replication of the viral minus-strand RNAs (4 hpi), the polyproteins are cut at the nsP1/nsP2 and nsP2/nsP3 sites very efficiently, preventing accumulation of P123 and allowing the formation of the late replication complex. In terms of processing, specific enzymatic cleavages in vivo yield mature proteins. The processing of the polyprotein is temporally regulated. In early stages (1.7 hpi), P123' is cleaved at the nsP1/nsP2 site with low efficiency. After replication of the viral minus-strand RNAs (4 hpi), the polyproteins are cut at the nsP1/nsP2 and nsP2/nsP3 sites very efficiently, preventing accumulation of P123' and allowing the formation of the late replication complex. Palmitoylated by host palmitoyltransferases ZDHHC2 and ZDHHC19. Post-translationally, phosphorylated by host on serines and threonines. In terms of processing, ubiquitinated; targets the protein for rapid degradation via the ubiquitin system. Nsp4 is present in extremely low quantities due to low frequency of translation through the amber stop-codon and the degradation by the ubiquitin pathway.

Its subcellular location is the host cytoplasmic vesicle membrane. It localises to the host cell membrane. It is found in the host cell projection. The protein localises to the host filopodium. The protein resides in the host nucleus. Its subcellular location is the host cytoplasm. The catalysed reaction is GTP + S-adenosyl-L-methionine = N(7)-methyl-GTP + S-adenosyl-L-homocysteine. It carries out the reaction N(7)-methyl-GTP + L-histidyl-[protein] = N(tele)-(N(7)-methylguanosine 5'-phospho)-L-histidyl-[protein] + diphosphate. The enzyme catalyses N(tele)-(N(7)-methylguanosine 5'-phospho)-L-histidyl-[protein] + a 5'-end diphospho-(purine-ribonucleoside) in mRNA + H(+) = a 5'-end (N(7)-methyl 5'-triphosphoguanosine)-(purine-ribonucleoside) in mRNA + L-histidyl-[protein]. It catalyses the reaction a 5'-end triphospho-ribonucleoside in mRNA + H2O = a 5'-end diphospho-ribonucleoside in mRNA + phosphate + H(+). The catalysed reaction is a ribonucleoside 5'-triphosphate + H2O = a ribonucleoside 5'-diphosphate + phosphate + H(+). It carries out the reaction ATP + H2O = ADP + phosphate + H(+). The enzyme catalyses RNA(n) + a ribonucleoside 5'-triphosphate = RNA(n+1) + diphosphate. It catalyses the reaction 4-O-(ADP-D-ribosyl)-L-aspartyl-[protein] + H2O = L-aspartyl-[protein] + ADP-D-ribose + H(+). The catalysed reaction is 5-O-(ADP-D-ribosyl)-L-glutamyl-[protein] + H2O = L-glutamyl-[protein] + ADP-D-ribose + H(+). It carries out the reaction RNA(n) + ATP = RNA(n)-3'-adenine ribonucleotide + diphosphate. The enzyme catalyses ADP-alpha-D-ribose 1''-phosphate + H2O = ADP-D-ribose + phosphate. Its activity is regulated as follows. Inhibited by sinefungin. Functionally, inactive precursor of the viral replicase, which is activated by cleavages carried out by the viral protease nsP2. In terms of biological role, the early replication complex formed by the polyprotein P123 and nsP4 synthesizes the minus-strand RNAs (antigenome). Polyprotein P123 is a short-lived polyprotein that accumulates during early stage of infection. As soon P123 is cleaved into mature proteins, the plus-strand RNAs synthesis begins. Its function is as follows. The early replication complex formed by the polyprotein P123' and nsP4 synthesizes minus-strand RNAs (antigenome). Polyprotein P123' is a short-lived polyprotein that accumulates during early stage of infection. As soon P123' is cleaved into mature proteins, the plus-strand RNAs synthesis begins. Cytoplasmic capping enzyme that catalyzes two virus-specific reactions: methyltransferase and nsP1 guanylyltransferase. mRNA-capping is necessary since all viral RNAs are synthesized in the cytoplasm, and host capping enzymes are restricted to the nucleus. The enzymatic reaction involves a covalent link between 7-methyl-GMP and nsP1, whereas eukaryotic capping enzymes form a covalent complex only with GMP. NsP1 capping consists in the following reactions: GTP is first methylated into 7-methyl-GMP and then is covalently linked to nsP1 to form the m7GMp-nsP1 complex from which 7-methyl-GMP complex is transferred to the mRNA to create the cap structure. NsP1 is also needed for the initiation of the minus-strand RNAs synthesis. Probably serves as a membrane anchor for the replication complex composed of nsP1-nsP4. Nsp1 is needed for the initiation of the minus-strand RNAs synthesis. Palmitoylated nsP1 is remodeling host cell cytoskeleton, and induces filopodium-like structure formation at the surface of the host cell. Functionally, multifunctional protein whose N-terminus is part of the RNA polymerase complex and displays NTPase, RNA triphosphatase and helicase activities. NTPase and RNA triphosphatase are involved in viral RNA capping and helicase keeps a check on the dsRNA replication intermediates. The C-terminus harbors a protease that specifically cleaves the polyproteins and releases the mature proteins. Required for the shutoff of minus-strand RNAs synthesis. Inhibits host translation to ensure maximal viral gene expression and evade host immune response. In terms of biological role, seems to be essential for minus-strand RNAs and subgenomic 26S mRNAs synthesis. Displays mono-ADP-ribosylhydrolase activity. ADP-ribosylation is a post-translational modification that controls various processes of the host cell and the virus probably needs to revert it for optimal viral replication. Binds proteins of FXR family and sequesters them into the viral RNA replication complexes thereby inhibiting the formation of host stress granules on viral mRNAs. The nsp3-FXR complexes bind viral RNAs and probably orchestrate the assembly of viral replication complexes, thanks to the ability of FXR family members to self-assemble and bind DNA. Its function is as follows. Seems to be essential for minus-strand RNAs and subgenomic 26S mRNAs synthesis. Displays mono-ADP-ribosylhydrolase activity. ADP-ribosylation is a post-translational modification that controls various processes of the host cell and the virus probably needs to revert it for optimal viral replication. Binds proteins of FXR family and sequesters them into the viral RNA replication complexes thereby inhibiting the formation of host stress granules on viral mRNAs. The nsp3'-FXR complexes bind viral RNAs and probably orchestrate the assembly of viral replication complexes, thanks to the ability of FXR family members to self-assemble and bind DNA. RNA dependent RNA polymerase. Replicates genomic and antigenomic RNA by recognizing replications specific signals. The early replication complex formed by the polyprotein P123 and nsP4 synthesizes minus-strand RNAs. The late replication complex composed of fully processed nsP1-nsP4 is responsible for the production of genomic and subgenomic plus-strand RNAs. The protein is Polyprotein P1234 of Venezuelan equine encephalitis virus (VEEV).